The sequence spans 292 residues: Tissue factor (292 aa).

A signal peptide spans 1–35 (MATPNGPRVPCPQAAVARALLFGLVLIQGAGVAGT). At 36–248 (TDVVVAYNIT…TSHEKVLSTE (213 aa)) the chain is on the extracellular side. N-linked (GlcNAc...) asparagine glycosylation is present at Asn43. The short motif at 46-48 (WKS) is the WKS motif element. Cys81 and Cys89 are oxidised to a cystine. Asn153 and Asn181 each carry an N-linked (GlcNAc...) asparagine glycan. A disulfide bond links Cys215 and Cys238. Residues 249–271 (LFFIIGTVMLVIIIFIVVLSVSL) form a helical membrane-spanning segment. At 272-292 (HKCRKVRAERSGKENTPLNAA) the chain is on the cytoplasmic side. The S-palmitoyl cysteine moiety is linked to residue Cys274.

Belongs to the tissue factor family. In terms of assembly, interacts with HSPE; the interaction, inhibited by heparin, promotes the generation of activated factor X and activates coagulation in the presence of activated factor VII.

The protein localises to the membrane. Initiates blood coagulation by forming a complex with circulating factor VII or VIIa. The [TF:VIIa] complex activates factors IX or X by specific limited proteolysis. TF plays a role in normal hemostasis by initiating the cell-surface assembly and propagation of the coagulation protease cascade. In Bos taurus (Bovine), this protein is Tissue factor (F3).